We begin with the raw amino-acid sequence, 93 residues long: Small ribosomal subunit protein uS19 (93 aa).

It belongs to the universal ribosomal protein uS19 family.

Functionally, protein S19 forms a complex with S13 that binds strongly to the 16S ribosomal RNA. This is Small ribosomal subunit protein uS19 from Campylobacter fetus subsp. fetus (strain 82-40).